The chain runs to 61 residues: Large ribosomal subunit protein uL30 (61 aa).

This sequence belongs to the universal ribosomal protein uL30 family. Part of the 50S ribosomal subunit.

This chain is Large ribosomal subunit protein uL30, found in Colwellia psychrerythraea (strain 34H / ATCC BAA-681) (Vibrio psychroerythus).